Here is a 296-residue protein sequence, read N- to C-terminus: Nitrogenase iron protein 2 (296 aa).

Residue 11 to 18 coordinates ATP; the sequence is GKGGIGKS. C99 lines the [4Fe-4S] cluster pocket. An ADP-ribosylarginine; by dinitrogenase reductase ADP-ribosyltransferase modification is found at R102. C133 serves as a coordination point for [4Fe-4S] cluster.

This sequence belongs to the NifH/BchL/ChlL family. In terms of assembly, homodimer. Requires [4Fe-4S] cluster as cofactor. Post-translationally, the reversible ADP-ribosylation of Arg-102 inactivates the nitrogenase reductase and regulates nitrogenase activity.

The enzyme catalyses N2 + 8 reduced [2Fe-2S]-[ferredoxin] + 16 ATP + 16 H2O = H2 + 8 oxidized [2Fe-2S]-[ferredoxin] + 2 NH4(+) + 16 ADP + 16 phosphate + 6 H(+). The key enzymatic reactions in nitrogen fixation are catalyzed by the nitrogenase complex, which has 2 components: the iron protein and the molybdenum-iron protein. This Azorhizobium caulinodans (strain ATCC 43989 / DSM 5975 / JCM 20966 / LMG 6465 / NBRC 14845 / NCIMB 13405 / ORS 571) protein is Nitrogenase iron protein 2 (nifH2).